A 239-amino-acid polypeptide reads, in one-letter code: tRNA (guanine-N(1)-)-methyltransferase (239 aa).

Residues G110 and V130 to L135 contribute to the S-adenosyl-L-methionine site.

This sequence belongs to the RNA methyltransferase TrmD family. In terms of assembly, homodimer.

The protein localises to the cytoplasm. The catalysed reaction is guanosine(37) in tRNA + S-adenosyl-L-methionine = N(1)-methylguanosine(37) in tRNA + S-adenosyl-L-homocysteine + H(+). Functionally, specifically methylates guanosine-37 in various tRNAs. In Borrelia hermsii (strain HS1 / DAH), this protein is tRNA (guanine-N(1)-)-methyltransferase.